A 428-amino-acid polypeptide reads, in one-letter code: Enolase (428 aa).

Gln-163 contributes to the (2R)-2-phosphoglycerate binding site. Glu-205 (proton donor) is an active-site residue. Asp-242, Glu-285, and Asp-312 together coordinate Mg(2+). The (2R)-2-phosphoglycerate site is built by Lys-337, Arg-366, Ser-367, and Lys-388. The Proton acceptor role is filled by Lys-337.

It belongs to the enolase family. The cofactor is Mg(2+).

It localises to the cytoplasm. Its subcellular location is the secreted. The protein localises to the cell surface. It carries out the reaction (2R)-2-phosphoglycerate = phosphoenolpyruvate + H2O. It functions in the pathway carbohydrate degradation; glycolysis; pyruvate from D-glyceraldehyde 3-phosphate: step 4/5. In terms of biological role, catalyzes the reversible conversion of 2-phosphoglycerate (2-PG) into phosphoenolpyruvate (PEP). It is essential for the degradation of carbohydrates via glycolysis. This chain is Enolase, found in Erythrobacter litoralis (strain HTCC2594).